Here is a 568-residue protein sequence, read N- to C-terminus: Pentatricopeptide repeat-containing protein At1g73400, mitochondrial (568 aa).

A mitochondrion-targeting transit peptide spans 1 to 55; it reads MMRRLVSYFVRSRFSLHLSTTPPQRSALFSHILSSHLDSIQINKKISSFSVHRFC. PPR repeat units follow at residues 233–263, 267–301, 302–336, 340–374, 375–409, 410–444, 445–479, and 480–514; these read EINAFNMLLDALCKCGLVKEGEALLRRMRHR, DANTFNVLFFGWCRVRDPKKAMKLLEEMIEAGHKP, ENFTYCAAIDTFCQAGMVDEAADLFDFMITKGSAV, TAKTFALMIVALAKNDKAEECFELIGRMISTGCLP, DVSTYKDVIEGMCMAEKVDEAYKFLDEMSNKGYPP, DIVTYNCFLRVLCENRKTDEALKLYGRMVESRCAP, SVQTYNMLISMFFEMDDPDGAFNTWTEMDKRDCVQ, and DVETYCAMINGLFDCHRAKEACFLLEEVVNKGLKL.

Belongs to the PPR family. P subfamily.

Its subcellular location is the mitochondrion. The polypeptide is Pentatricopeptide repeat-containing protein At1g73400, mitochondrial (Arabidopsis thaliana (Mouse-ear cress)).